Here is a 275-residue protein sequence, read N- to C-terminus: C-type lectin domain family 12 member B (275 aa).

The Cytoplasmic portion of the chain corresponds to 1–41 (MSDEVTYATLMLQDSARVRGNQDGNNLRKEGHPAQSSLWRG). The ITIM motif motif lies at 5 to 10 (VTYATL). Y7 is subject to Phosphotyrosine. A helical; Signal-anchor for type II membrane protein membrane pass occupies residues 42-64 (AALSLMTLCLVLVTGLVTLATMF). Residues 65–275 (LQVSNDINSD…ASLVKTEDLD (211 aa)) are Extracellular-facing. N91, N175, and N236 each carry an N-linked (GlcNAc...) asparagine glycan. Residues 149 to 263 (YGNSCYYFSI…CSAEIPWICE (115 aa)) form the C-type lectin domain. 2 disulfides stabilise this stretch: C171-C262 and C241-C254.

In terms of assembly, homodimer. Interacts (via ITIM motif) with PTPN6. Interacts (via ITIM motif) with PTPN11; this interaction triggers dephosphorylation and activation of PTPN11.

The protein localises to the cell membrane. Inhibitory receptor postulated to negatively regulate immune and non-immune functions. Upon phosphorylation, recruits SH2 domain-containing PTPN6 and PTPN11 phosphatases to its ITIM motif and antagonizes activation signals. Although it inhibits KLRK1/NKG2D-mediated signaling, it does not bind known ligands of KLRK1/NKG2D and therefore is not its inhibitory counterpart. May limit activation of myeloid cell subsets in response to infection or tissue inflammation. May protect target cells against natural killer cell-mediated lysis. May negatively regulate cell cycle and differentiation of melanocytes via inactivation of STAT3. The sequence is that of C-type lectin domain family 12 member B (Clec12b) from Mus musculus (Mouse).